A 118-amino-acid chain; its full sequence is REPTOR-binding partner (118 aa).

Positions 1 to 20 are enriched in polar residues; it reads MADMEIQSNKMSITEETQVQ. The tract at residues 1–53 is disordered; sequence MADMEIQSNKMSITEETQVQTRKECGKRGRKPGRKTSTEKLDMKAKLERSRQS. Residues 36 to 53 show a composition bias toward basic and acidic residues; the sequence is TSTEKLDMKAKLERSRQS. The basic motif stretch occupies residues 40 to 77; the sequence is KLDMKAKLERSRQSARECRARKKLRYQYLEELVADREK. In terms of domain architecture, bZIP spans 40–90; that stretch reads KLDMKAKLERSRQSARECRARKKLRYQYLEELVADREKAVVALRTELERLI. Positions 82–89 are leucine-zipper; that stretch reads LRTELERL.

Belongs to the bZIP family. ATF subfamily. In terms of assembly, homodimer. Interacts (via C-terminus) with REPTOR (via C-terminus).

The protein resides in the nucleus. The protein localises to the chromosome. Transcriptional regulator that acts in the TORC1 signaling pathway to regulate energy homeostasis and promote survival during nutrient deprivation. Interacts with REPTOR to form a transcriptional activator complex that functions downstream of TORC1 to up-regulate the expression of most target genes induced by TORC1 inhibition. In the complex, acts to enhance the binding of the transcriptional activator REPTOR to the regulatory sequences of target genes. Under normal conditions TORC1 is active, inhibiting the formation of the REPTOR/REPTOR-BP complex by phosphorylating REPTOR and mediates its cytoplasmic retention by forming a docking site for 14-3-3 proteins. Upon TORC1 inhibition resulting from nutrient stress, REPTOR is recruited into the nucleus where it interacts with REPTOR-BP and together they maintain organismal metabolism by activating the expression of target stress response genes including those involved in glycogenesis and triglyceride biosynthesis. The complex also appears to negatively regulate some aspects of TORC1-dependent larval growth. In Drosophila melanogaster (Fruit fly), this protein is REPTOR-binding partner.